A 321-amino-acid chain; its full sequence is Beta-porphyranase B (321 aa).

The signal sequence occupies residues 1–20; that stretch reads MRKTVLYLSAASLFLSSYTL. Residues 31–319 enclose the GH16 domain; that stretch reads EHIKNLPEAP…WVRAYKLVPI (289 aa). Substrate contacts are provided by Trp-72, Arg-76, Glu-173, Glu-178, and Glu-284. Residue Glu-173 is the Nucleophile of the active site. The active-site Proton donor is the Glu-178.

Belongs to the glycosyl hydrolase 16 family.

The catalysed reaction is Hydrolysis of beta-D-galactopyranose-(1-&gt;4)-alpha-L-galactopyranose-6-sulfate linkages in porphyran.. Its function is as follows. Cleaves the sulfated polysaccharide porphyran at the (1-&gt;4) linkages between beta-D-galactopyranose and alpha-L-galactopyranose-6-sulfate, forming mostly the disaccharide alpha-L-galactopyranose-6-sulfate-(1-&gt;3)-beta-D-galactose. Some longer oligosaccharides of even number of residues are also observed. Inactive on the non-sulfated agarose portion of the porphyran backbone. The sequence is that of Beta-porphyranase B from Phocaeicola plebeius (strain DSM 17135 / JCM 12973 / CCUG 54634 / M2) (Bacteroides plebeius).